A 485-amino-acid chain; its full sequence is CCA-adding enzyme (485 aa).

Residues S53 and R56 each contribute to the ATP site. CTP is bound by residues S53 and R56. Mg(2+) contacts are provided by D65, D67, and D124. ATP is bound by residues H146, K164, and Y173. H146, K164, and Y173 together coordinate CTP.

The protein belongs to the tRNA nucleotidyltransferase/poly(A) polymerase family. Archaeal CCA-adding enzyme subfamily. Homodimer. The cofactor is Mg(2+).

The enzyme catalyses a tRNA precursor + 2 CTP + ATP = a tRNA with a 3' CCA end + 3 diphosphate. The catalysed reaction is a tRNA with a 3' CCA end + 2 CTP + ATP = a tRNA with a 3' CCACCA end + 3 diphosphate. Catalyzes the addition and repair of the essential 3'-terminal CCA sequence in tRNAs without using a nucleic acid template. Adds these three nucleotides in the order of C, C, and A to the tRNA nucleotide-73, using CTP and ATP as substrates and producing inorganic pyrophosphate. tRNA 3'-terminal CCA addition is required both for tRNA processing and repair. Also involved in tRNA surveillance by mediating tandem CCA addition to generate a CCACCA at the 3' terminus of unstable tRNAs. While stable tRNAs receive only 3'-terminal CCA, unstable tRNAs are marked with CCACCA and rapidly degraded. This is CCA-adding enzyme from Methanopyrus kandleri (strain AV19 / DSM 6324 / JCM 9639 / NBRC 100938).